A 240-amino-acid chain; its full sequence is Transmembrane emp24 domain-containing protein 6 (240 aa).

A signal peptide spans 1–21; sequence MSPLLFGAGLVVLNLVTSARS. Residues 22–200 lie on the Lumenal side of the membrane; that stretch reads QKTEPLSGSG…FFLIQSNYNY (179 aa). The GOLD domain occupies 53–138; the sequence is TECFWQFAHQ…SVQVYLNFGV (86 aa). 2 N-linked (GlcNAc...) asparagine glycosylation sites follow: N107 and N156. Residues 201–223 form a helical membrane-spanning segment; that stretch reads VNWWSTAQSLVIILSGILQLYFL. The Cytoplasmic segment spans residues 224-240; it reads KRLFNVPTTTDTKKPRC.

The protein belongs to the EMP24/GP25L family.

The protein resides in the endoplasmic reticulum membrane. The polypeptide is Transmembrane emp24 domain-containing protein 6 (TMED6) (Homo sapiens (Human)).